We begin with the raw amino-acid sequence, 160 residues long: Transcription elongation factor GreA (160 aa).

The stretch at 49–73 forms a coiled coil; the sequence is HAAKEEQSHNEGRIADLEDKLARAD.

This sequence belongs to the GreA/GreB family.

Functionally, necessary for efficient RNA polymerase transcription elongation past template-encoded arresting sites. The arresting sites in DNA have the property of trapping a certain fraction of elongating RNA polymerases that pass through, resulting in locked ternary complexes. Cleavage of the nascent transcript by cleavage factors such as GreA or GreB allows the resumption of elongation from the new 3'terminus. GreA releases sequences of 2 to 3 nucleotides. The polypeptide is Transcription elongation factor GreA (Rhodopseudomonas palustris (strain BisA53)).